The primary structure comprises 307 residues: DNA damage tolerance protein rad31 (307 aa).

Its function is as follows. Could be involved in a ubiquitin-related process important for DNA damage tolerance. Acts in a process which is defective in the checkpoint rad mutants and which involves hus5. This Schizosaccharomyces pombe (strain 972 / ATCC 24843) (Fission yeast) protein is DNA damage tolerance protein rad31 (rad31).